We begin with the raw amino-acid sequence, 343 residues long: UDP-3-O-acylglucosamine N-acyltransferase 2 (343 aa).

H251 acts as the Proton acceptor in catalysis.

This sequence belongs to the transferase hexapeptide repeat family. LpxD subfamily. In terms of assembly, homotrimer.

The catalysed reaction is a UDP-3-O-[(3R)-3-hydroxyacyl]-alpha-D-glucosamine + a (3R)-hydroxyacyl-[ACP] = a UDP-2-N,3-O-bis[(3R)-3-hydroxyacyl]-alpha-D-glucosamine + holo-[ACP] + H(+). It functions in the pathway bacterial outer membrane biogenesis; LPS lipid A biosynthesis. Its function is as follows. Catalyzes the N-acylation of UDP-3-O-acylglucosamine using 3-hydroxyacyl-ACP as the acyl donor. Is involved in the biosynthesis of lipid A, a phosphorylated glycolipid that anchors the lipopolysaccharide to the outer membrane of the cell. The polypeptide is UDP-3-O-acylglucosamine N-acyltransferase 2 (Legionella pneumophila subsp. pneumophila (strain Philadelphia 1 / ATCC 33152 / DSM 7513)).